The primary structure comprises 404 residues: DNA gyrase subunit B (404 aa).

In terms of domain architecture, Toprim spans 321 to 404 (SEIYIVEGDS…VIIMTDADVD (84 aa)). Mg(2+)-binding residues include Glu327, Asp400, and Asp402.

The protein belongs to the type II topoisomerase GyrB family. As to quaternary structure, heterotetramer, composed of two GyrA and two GyrB chains. In the heterotetramer, GyrA contains the active site tyrosine that forms a transient covalent intermediate with DNA, while GyrB binds cofactors and catalyzes ATP hydrolysis. It depends on Mg(2+) as a cofactor. Mn(2+) is required as a cofactor. Requires Ca(2+) as cofactor.

It is found in the cytoplasm. It carries out the reaction ATP-dependent breakage, passage and rejoining of double-stranded DNA.. Functionally, a type II topoisomerase that negatively supercoils closed circular double-stranded (ds) DNA in an ATP-dependent manner to modulate DNA topology and maintain chromosomes in an underwound state. Negative supercoiling favors strand separation, and DNA replication, transcription, recombination and repair, all of which involve strand separation. Also able to catalyze the interconversion of other topological isomers of dsDNA rings, including catenanes and knotted rings. Type II topoisomerases break and join 2 DNA strands simultaneously in an ATP-dependent manner. In Bacillus cereus, this protein is DNA gyrase subunit B (gyrB).